The sequence spans 940 residues: Alanine--tRNA ligase (940 aa).

Residues histidine 581, histidine 585, cysteine 683, and histidine 687 each contribute to the Zn(2+) site.

It belongs to the class-II aminoacyl-tRNA synthetase family. Zn(2+) is required as a cofactor.

Its subcellular location is the cytoplasm. The catalysed reaction is tRNA(Ala) + L-alanine + ATP = L-alanyl-tRNA(Ala) + AMP + diphosphate. Its function is as follows. Catalyzes the attachment of alanine to tRNA(Ala) in a two-step reaction: alanine is first activated by ATP to form Ala-AMP and then transferred to the acceptor end of tRNA(Ala). Also edits incorrectly charged Ser-tRNA(Ala) and Gly-tRNA(Ala) via its editing domain. This Leptospira borgpetersenii serovar Hardjo-bovis (strain L550) protein is Alanine--tRNA ligase.